Consider the following 358-residue polypeptide: Heme A synthase (358 aa).

8 consecutive transmembrane segments (helical) span residues 22-42 (IQVW…VGGA), 107-127 (VLGR…WAIK), 133-153 (VLLQ…VGWW), 172-192 (LAFH…LSQG), 208-228 (FAGW…LVAG), 269-289 (FVHR…AFYV), 302-322 (AFFI…TLLQ), and 324-344 (VPIS…CFSV). His-271 lines the heme pocket. Residue His-332 coordinates heme.

Belongs to the COX15/CtaA family. Type 2 subfamily. In terms of assembly, interacts with CtaB. It depends on heme b as a cofactor.

It localises to the cell membrane. The enzyme catalyses Fe(II)-heme o + 2 A + H2O = Fe(II)-heme a + 2 AH2. Its pathway is porphyrin-containing compound metabolism; heme A biosynthesis; heme A from heme O: step 1/1. In terms of biological role, catalyzes the conversion of heme O to heme A by two successive hydroxylations of the methyl group at C8. The first hydroxylation forms heme I, the second hydroxylation results in an unstable dihydroxymethyl group, which spontaneously dehydrates, resulting in the formyl group of heme A. This chain is Heme A synthase, found in Bartonella henselae (strain ATCC 49882 / DSM 28221 / CCUG 30454 / Houston 1) (Rochalimaea henselae).